The primary structure comprises 346 residues: Melatonin receptor type 1C (346 aa).

Residues 1-26 (MERPGSNGSCSGCRLEGGPAARAASG) are Extracellular-facing. Residue Asn7 is glycosylated (N-linked (GlcNAc...) asparagine). A helical transmembrane segment spans residues 27 to 47 (LAAVLIVTIVVDVLGNALVIL). Residues 48 to 60 (SVLRNKKLRNAGN) are Cytoplasmic-facing. Residues 61–81 (IFVVSLSVADLVVAVYPYPLI) traverse the membrane as a helical segment. The Extracellular portion of the chain corresponds to 82 to 99 (LSAIFHNGWTMGNIHCQI). Cys97 and Cys174 are joined by a disulfide. Residues 100–120 (SGFLMGLSVIGSIFNITAIAI) traverse the membrane as a helical segment. Residues 121 to 139 (NRYCYICHSLRYDKLFNLK) are Cytoplasmic-facing. The chain crosses the membrane as a helical span at residues 140 to 160 (NTCCYICLTWTLTVVAIVPNF). The Extracellular segment spans residues 161-184 (FVGSLQYDPRIYSCTFAQTVSTSY). The chain crosses the membrane as a helical span at residues 185-205 (TITVVVVHFIVPLSIVTFCYL). The Cytoplasmic segment spans residues 206-237 (RIWILVIQVKHRVRQDCKQKIRAADIRNFLTM). The helical transmembrane segment at 238–258 (FVVFVLFAVCWGPLNFIGLAV) threads the bilayer. The Extracellular portion of the chain corresponds to 259–271 (SINPSKVQPHIPE). The helical transmembrane segment at 272–292 (WLFVLSYFMAYFNSCLNAVIY) threads the bilayer. Over 293-346 (GLLNQNFRKEYKRILLMLRTPRLLFIDVSKGGTEGLKSKPSPAVTNNNQAEIHL) the chain is Cytoplasmic. The interval 326 to 346 (EGLKSKPSPAVTNNNQAEIHL) is disordered. The span at 335–346 (AVTNNNQAEIHL) shows a compositional bias: polar residues.

The protein belongs to the G-protein coupled receptor 1 family. In terms of tissue distribution, expressed in optic tectum, neostriatum, hypothalamus, thalamus and pineal gland, less in cerebellum and retina.

It is found in the cell membrane. Functionally, high affinity receptor for melatonin. The activity of this receptor is mediated by pertussis toxin sensitive G proteins that inhibits adenylate cyclase activity. The sequence is that of Melatonin receptor type 1C from Gallus gallus (Chicken).